Reading from the N-terminus, the 351-residue chain is Probable aldo-keto reductase 2 (351 aa).

The Proton donor role is filled by Tyr-67. His-134 is a binding site for substrate. 213 to 223 lines the NADP(+) pocket; it reads SPLGRGFFSAG. Residues 317-351 are disordered; sequence YASTDDVRGDRYPQAMANTTWQNSETPPLSSWKAQ. A compositionally biased stretch (polar residues) spans 332–351; it reads MANTTWQNSETPPLSSWKAQ.

The protein belongs to the aldo/keto reductase family.

The polypeptide is Probable aldo-keto reductase 2 (Oryza sativa subsp. indica (Rice)).